The primary structure comprises 288 residues: Extracellular ribonuclease (288 aa).

The signal sequence occupies residues 1-26 (MTKKAWFLPLVCVLLISGWLAPAASA).

It localises to the secreted. Functionally, mg(2+)-activated ribonuclease which hydrolyzes RNA apparently nonspecifically into oligonucleotides with 5'-terminal phosphate. The chain is Extracellular ribonuclease (bsn) from Bacillus subtilis (strain 168).